Consider the following 448-residue polypeptide: Squalene synthase ERG9 (448 aa).

A helical membrane pass occupies residues 428–448 (CNVVLFGIGALILSLIYFVLY).

This sequence belongs to the phytoene/squalene synthase family. Mg(2+) is required as a cofactor.

Its subcellular location is the endoplasmic reticulum membrane. The protein resides in the microsome. It carries out the reaction 2 (2E,6E)-farnesyl diphosphate + NADPH + H(+) = squalene + 2 diphosphate + NADP(+). It catalyses the reaction 2 (2E,6E)-farnesyl diphosphate + NADH + H(+) = squalene + 2 diphosphate + NAD(+). It participates in terpene metabolism; lanosterol biosynthesis; lanosterol from farnesyl diphosphate: step 1/3. Squalene synthase; part of the third module of ergosterol biosynthesis pathway that includes the late steps of the pathway. ERG9 produces squalene from 2 farnesyl pyrophosphate moieties. The third module or late pathway involves the ergosterol synthesis itself through consecutive reactions that mainly occur in the endoplasmic reticulum (ER) membrane. Firstly, the squalene synthase ERG9 catalyzes the condensation of 2 farnesyl pyrophosphate moieties to form squalene, which is the precursor of all steroids. Squalene synthase is crucial for balancing the incorporation of farnesyl diphosphate (FPP) into sterol and nonsterol isoprene synthesis. Secondly, the squalene epoxidase ERG1 catalyzes the stereospecific oxidation of squalene to (S)-2,3-epoxysqualene, which is considered to be a rate-limiting enzyme in steroid biosynthesis. Then, the lanosterol synthase ERG7 catalyzes the cyclization of (S)-2,3 oxidosqualene to lanosterol, a reaction that forms the sterol core. In the next steps, lanosterol is transformed to zymosterol through a complex process involving various demethylation, reduction and desaturation reactions. The lanosterol 14-alpha-demethylase ERG11 (also known as CYP51) catalyzes C14-demethylation of lanosterol to produce 4,4'-dimethyl cholesta-8,14,24-triene-3-beta-ol, which is critical for ergosterol biosynthesis. The C-14 reductase ERG24 reduces the C14=C15 double bond of 4,4-dimethyl-cholesta-8,14,24-trienol to produce 4,4-dimethyl-cholesta-8,24-dienol. 4,4-dimethyl-cholesta-8,24-dienol is substrate of the C-4 demethylation complex ERG25-ERG26-ERG27 in which ERG25 catalyzes the three-step monooxygenation required for the demethylation of 4,4-dimethyl and 4alpha-methylsterols, ERG26 catalyzes the oxidative decarboxylation that results in a reduction of the 3-beta-hydroxy group at the C-3 carbon to an oxo group, and ERG27 is responsible for the reduction of the keto group on the C-3. ERG28 has a role as a scaffold to help anchor ERG25, ERG26 and ERG27 to the endoplasmic reticulum and ERG29 regulates the activity of the iron-containing C4-methylsterol oxidase ERG25. Then, the sterol 24-C-methyltransferase ERG6 catalyzes the methyl transfer from S-adenosyl-methionine to the C-24 of zymosterol to form fecosterol. The C-8 sterol isomerase ERG2 catalyzes the reaction which results in unsaturation at C-7 in the B ring of sterols and thus converts fecosterol to episterol. The sterol-C5-desaturase ERG3 then catalyzes the introduction of a C-5 double bond in the B ring to produce 5-dehydroepisterol. The C-22 sterol desaturase ERG5 further converts 5-dehydroepisterol into ergosta-5,7,22,24(28)-tetraen-3beta-ol by forming the C-22(23) double bond in the sterol side chain. Finally, ergosta-5,7,22,24(28)-tetraen-3beta-ol is substrate of the C-24(28) sterol reductase ERG4 to produce ergosterol. The polypeptide is Squalene synthase ERG9 (Candida albicans (strain SC5314 / ATCC MYA-2876) (Yeast)).